A 307-amino-acid polypeptide reads, in one-letter code: Glycine--tRNA ligase alpha subunit (307 aa).

This sequence belongs to the class-II aminoacyl-tRNA synthetase family. Tetramer of two alpha and two beta subunits.

Its subcellular location is the cytoplasm. The enzyme catalyses tRNA(Gly) + glycine + ATP = glycyl-tRNA(Gly) + AMP + diphosphate. The sequence is that of Glycine--tRNA ligase alpha subunit from Aeromonas hydrophila subsp. hydrophila (strain ATCC 7966 / DSM 30187 / BCRC 13018 / CCUG 14551 / JCM 1027 / KCTC 2358 / NCIMB 9240 / NCTC 8049).